The sequence spans 352 residues: Endophilin-A1 (352 aa).

Residues 1 to 21 (MSVAGLKKQFHKATQKVSEKV) are membrane-binding amphipathic helix. Residues 1 to 27 (MSVAGLKKQFHKATQKVSEKVGGAEGT) form a disordered region. The tract at residues 1–125 (MSVAGLKKQF…EVGEAMRELS (125 aa)) is binds and tubulates liposomes. The BAR domain occupies 18-249 (SEKVGGAEGT…LEERIRQASS (232 aa)). The tract at residues 60–87 (PNPASRAKLSMINTMSKIRGQEKGPGYP) is required for dimerization upon membrane association. A coiled-coil region spans residues 181–248 (EELRQALEKF…RLEERIRQAS (68 aa)). The segment covering 245–257 (RQASSQPRREYQP) has biased composition (basic and acidic residues). The tract at residues 245–289 (RQASSQPRREYQPKPRMSLEFPTGDSTQPNGGLSHTGTPKPSGVQ) is disordered. Ser-262 carries the post-translational modification Phosphoserine. Polar residues predominate over residues 268-283 (GDSTQPNGGLSHTGTP). One can recognise an SH3 domain in the interval 290 to 349 (MDQPCCRALYDFEPENEGELGFKEGDIITLTNQIDENWYEGMLHGHSGFFPINYVEILVA). Tyr-299 bears the Phosphotyrosine mark.

Belongs to the endophilin family. As to quaternary structure, monomer; in cytoplasm. Homodimer; when associated with membranes. Interacts with OPHN1. Interacts with SYNJ1. Interacts with DNM1. Interacts with MAP4K3; the interaction appears to regulate MAP4K3-mediated JNK activation. Interacts with PDCD6IP. Interacts with ATXN2. Interacts with ADAM9 and ADAM15 cytoplasmic tails. Interacts with BIN2. Interacts with TMEM108. Interacts with ADGRB2. Brain, mostly in frontal cortex. Expressed at high level in fetal cerebellum.

It is found in the cytoplasm. It localises to the membrane. The protein resides in the early endosome. Its subcellular location is the presynapse. Implicated in synaptic vesicle endocytosis. May recruit other proteins to membranes with high curvature. Required for BDNF-dependent dendrite outgrowth. Cooperates with SH3GL2 to mediate BDNF-NTRK2 early endocytic trafficking and signaling from early endosomes. The sequence is that of Endophilin-A1 (SH3GL2) from Homo sapiens (Human).